The following is a 516-amino-acid chain: HMG box-containing protein 1 (516 aa).

Positions 150-182 (ARPPPVSSSSKSGPAFPHDHWKEETPVRHERAN) are disordered. The segment covering 156–165 (SSSSKSGPAF) has biased composition (low complexity). Basic and acidic residues predominate over residues 166 to 182 (PHDHWKEETPVRHERAN). The 143-residue stretch at 203–345 (WCNSWPSTIW…PPGHPDAINF (143 aa)) folds into the AXH domain. Residues 436–504 (CKRPMNAFML…EQKRLNPDCW (69 aa)) constitute a DNA-binding region (HMG box).

In terms of assembly, binds TCF4. Binds RB1. Binds the second PAH repeat of SIN3A. Post-translationally, ubiquitinated by the CTLH E3 ubiquitin-protein ligase complex, leading to subsequent proteasomal degradation.

Its subcellular location is the nucleus. In terms of biological role, transcriptional repressor that binds to the promoter region of target genes. Plays a role in the regulation of the cell cycle and of the Wnt pathway. Binds preferentially to the sequence 5'-TTCATTCATTCA-3'. Binding to the histone H1.0 promoter is enhanced by interaction with RB1. Disrupts the interaction between DNA and TCF4. In Mus musculus (Mouse), this protein is HMG box-containing protein 1 (Hbp1).